We begin with the raw amino-acid sequence, 316 residues long: Ninja-family protein 2 (316 aa).

Disordered stretches follow at residues 1–29 (MASRDFLGRFGGEKGSSSDKAGGGAGEPD) and 72–236 (TSDD…TSTG). The span at 99–108 (ERWRRREMQS) shows a compositional bias: basic and acidic residues. Residues 156–166 (DQGNTSSSMPE) are compositionally biased toward polar residues. Low complexity-rich tracts occupy residues 179–199 (SSMEISSDNNNNNNASNQNKS) and 222–235 (LRTLRSLTMRTTST).

This sequence belongs to the Ninja family.

The protein resides in the nucleus. The chain is Ninja-family protein 2 (AFP-B1) from Triticum aestivum (Wheat).